A 320-amino-acid polypeptide reads, in one-letter code: o-succinylbenzoate synthase (320 aa).

Residue Lys-133 is the Proton donor of the active site. Positions 161, 190, and 213 each coordinate Mg(2+). Lys-235 serves as the catalytic Proton acceptor.

Belongs to the mandelate racemase/muconate lactonizing enzyme family. MenC type 1 subfamily. Requires a divalent metal cation as cofactor.

The enzyme catalyses (1R,6R)-6-hydroxy-2-succinyl-cyclohexa-2,4-diene-1-carboxylate = 2-succinylbenzoate + H2O. It functions in the pathway quinol/quinone metabolism; 1,4-dihydroxy-2-naphthoate biosynthesis; 1,4-dihydroxy-2-naphthoate from chorismate: step 4/7. Its pathway is quinol/quinone metabolism; menaquinone biosynthesis. Functionally, converts 2-succinyl-6-hydroxy-2,4-cyclohexadiene-1-carboxylate (SHCHC) to 2-succinylbenzoate (OSB). The sequence is that of o-succinylbenzoate synthase from Shigella boydii serotype 4 (strain Sb227).